Here is a 531-residue protein sequence, read N- to C-terminus: Apolipoprotein N-acyltransferase (531 aa).

7 helical membrane-spanning segments follow: residues 8-28 (IILL…LLAV), 34-54 (FGIF…IDGV), 69-89 (PAAI…WWLG), 105-125 (LTVV…VVIA), 136-156 (IAAL…LFTG), 178-198 (VVNL…PALI), and 206-226 (AGLA…FYRL). In terms of domain architecture, CN hydrolase spans 243 to 493 (VQPVIDQAKK…RGVIDTILPG (251 aa)). Glu-287 functions as the Proton acceptor in the catalytic mechanism. Lys-351 is an active-site residue. Residue Cys-405 is the Nucleophile of the active site. Residues 507-527 (IFWLTTGILFLVAAISRLGFN) traverse the membrane as a helical segment.

This sequence belongs to the CN hydrolase family. Apolipoprotein N-acyltransferase subfamily.

Its subcellular location is the cell inner membrane. The enzyme catalyses N-terminal S-1,2-diacyl-sn-glyceryl-L-cysteinyl-[lipoprotein] + a glycerophospholipid = N-acyl-S-1,2-diacyl-sn-glyceryl-L-cysteinyl-[lipoprotein] + a 2-acyl-sn-glycero-3-phospholipid + H(+). It functions in the pathway protein modification; lipoprotein biosynthesis (N-acyl transfer). Catalyzes the phospholipid dependent N-acylation of the N-terminal cysteine of apolipoprotein, the last step in lipoprotein maturation. This chain is Apolipoprotein N-acyltransferase, found in Rhizobium meliloti (strain 1021) (Ensifer meliloti).